We begin with the raw amino-acid sequence, 99 residues long: Large ribosomal subunit protein eL30 (99 aa).

It belongs to the eukaryotic ribosomal protein eL30 family.

This chain is Large ribosomal subunit protein eL30, found in Methanosarcina acetivorans (strain ATCC 35395 / DSM 2834 / JCM 12185 / C2A).